We begin with the raw amino-acid sequence, 490 residues long: Subtilisin-like protease 8 (490 aa).

An N-terminal signal peptide occupies residues 1–26 (MKGLLSLSVLPVLAYASPMIVDSIHQ). A propeptide spanning residues 27-134 (NAAPILSSTN…YIERDSEVHT (108 aa)) is cleaved from the precursor. The region spanning 43 to 134 (SYIVVFKKGV…YIERDSEVHT (92 aa)) is the Inhibitor I9 domain. A Peptidase S8 domain is found at 144–450 (PWGLARISHR…GGSDDYKKII (307 aa)). Catalysis depends on charge relay system residues D180 and H212. N282 carries an N-linked (GlcNAc...) asparagine glycan. S378 serves as the catalytic Charge relay system. An N-linked (GlcNAc...) asparagine glycan is attached at N456.

This sequence belongs to the peptidase S8 family.

It localises to the secreted. Functionally, secreted subtilisin-like serine protease with keratinolytic activity that contributes to pathogenicity. This Arthroderma benhamiae (strain ATCC MYA-4681 / CBS 112371) (Trichophyton mentagrophytes) protein is Subtilisin-like protease 8 (SUB8).